The sequence spans 395 residues: FAD-dependent urate hydroxylase (395 aa).

FAD-binding positions include Gly-11, 30–31 (ER), Ser-43, and Met-125. Substrate is bound by residues Asn-180, Arg-206, and 218 to 220 (YFF). FAD is bound by residues Asp-287 and 297–301 (GQGGC).

This sequence belongs to the FAD-dependent urate hydroxylase family. Monomer. FAD serves as cofactor.

It catalyses the reaction urate + NADH + O2 + H(+) = 5-hydroxyisourate + NAD(+) + H2O. It functions in the pathway purine metabolism; urate degradation. Its function is as follows. Catalyzes the hydroxylation of urate to 5-hydroxyisourate (HIU). Is likely to be involved in the urate degradation pathway to allantoin. Prefers NADH over NADPH as the electron donor. The protein is FAD-dependent urate hydroxylase of Mycolicibacterium vanbaalenii (strain DSM 7251 / JCM 13017 / BCRC 16820 / KCTC 9966 / NRRL B-24157 / PYR-1) (Mycobacterium vanbaalenii).